Consider the following 154-residue polypeptide: Myoglobin (154 aa).

The Globin domain occupies 2–148; sequence GLSDDEWHHV…FRNDMASKYK (147 aa). Histidine 65 contributes to the nitrite binding site. Histidine 65 lines the O2 pocket. Position 94 (histidine 94) interacts with heme b.

Belongs to the globin family. Monomeric.

It is found in the cytoplasm. The protein resides in the sarcoplasm. It catalyses the reaction Fe(III)-heme b-[protein] + nitric oxide + H2O = Fe(II)-heme b-[protein] + nitrite + 2 H(+). It carries out the reaction H2O2 + AH2 = A + 2 H2O. Functionally, monomeric heme protein which primary function is to store oxygen and facilitate its diffusion within muscle tissues. Reversibly binds oxygen through a pentacoordinated heme iron and enables its timely and efficient release as needed during periods of heightened demand. Depending on the oxidative conditions of tissues and cells, and in addition to its ability to bind oxygen, it also has a nitrite reductase activity whereby it regulates the production of bioactive nitric oxide. Under stress conditions, like hypoxia and anoxia, it also protects cells against reactive oxygen species thanks to its pseudoperoxidase activity. The polypeptide is Myoglobin (MB) (Graptemys geographica (Common map turtle)).